The primary structure comprises 148 residues: Small ribosomal subunit protein bS6 (148 aa).

The segment at 97-148 (EEGPSAMLQRRDDRERGDRGDRGPRRDFDDRGPRRPREDDRPRRSREDEGDE) is disordered.

It belongs to the bacterial ribosomal protein bS6 family.

In terms of biological role, binds together with bS18 to 16S ribosomal RNA. This chain is Small ribosomal subunit protein bS6, found in Chelativorans sp. (strain BNC1).